A 201-amino-acid chain; its full sequence is Recombination protein RecR (201 aa).

The C4-type zinc finger occupies 60–75 (CSCCGNVDTSDPCTIC). A Toprim domain is found at 83–178 (ATLIVVEDVS…RVTRLAHGVP (96 aa)).

Belongs to the RecR family.

In terms of biological role, may play a role in DNA repair. It seems to be involved in an RecBC-independent recombinational process of DNA repair. It may act with RecF and RecO. In Brucella melitensis biotype 1 (strain ATCC 23456 / CCUG 17765 / NCTC 10094 / 16M), this protein is Recombination protein RecR.